A 109-amino-acid polypeptide reads, in one-letter code: Small ribosomal subunit protein uS10c (109 aa).

It belongs to the universal ribosomal protein uS10 family. Part of the 30S ribosomal subunit.

The protein resides in the plastid. The protein localises to the chloroplast. In terms of biological role, involved in the binding of tRNA to the ribosomes. This chain is Small ribosomal subunit protein uS10c, found in Cyanidium caldarium (Red alga).